Reading from the N-terminus, the 472-residue chain is Aspartyl/glutamyl-tRNA(Asn/Gln) amidotransferase subunit B (472 aa).

It belongs to the GatB/GatE family. GatB subfamily. In terms of assembly, heterotrimer of A, B and C subunits.

It catalyses the reaction L-glutamyl-tRNA(Gln) + L-glutamine + ATP + H2O = L-glutaminyl-tRNA(Gln) + L-glutamate + ADP + phosphate + H(+). It carries out the reaction L-aspartyl-tRNA(Asn) + L-glutamine + ATP + H2O = L-asparaginyl-tRNA(Asn) + L-glutamate + ADP + phosphate + 2 H(+). Allows the formation of correctly charged Asn-tRNA(Asn) or Gln-tRNA(Gln) through the transamidation of misacylated Asp-tRNA(Asn) or Glu-tRNA(Gln) in organisms which lack either or both of asparaginyl-tRNA or glutaminyl-tRNA synthetases. The reaction takes place in the presence of glutamine and ATP through an activated phospho-Asp-tRNA(Asn) or phospho-Glu-tRNA(Gln). The chain is Aspartyl/glutamyl-tRNA(Asn/Gln) amidotransferase subunit B from Mycoplasmopsis agalactiae (strain NCTC 10123 / CIP 59.7 / PG2) (Mycoplasma agalactiae).